A 73-amino-acid chain; its full sequence is U3-agatoxin-Ao1k (73 aa).

The first 20 residues, 1–20 (MRTIISLLLLSAMVFAVIEA), serve as a signal peptide directing secretion. A propeptide spanning residues 21-34 (ISLEEGLQLFEGER) is cleaved from the precursor. 4 disulfide bridges follow: cysteine 36–cysteine 52, cysteine 43–cysteine 57, cysteine 51–cysteine 67, and cysteine 59–cysteine 65. A Serine amide modification is found at serine 71.

Belongs to the neurotoxin 07 (Beta/delta-agtx) family. 03 (aga-4) subfamily. Aga sub-subfamily. Expressed by the venom gland.

It is found in the secreted. Insecticidal neurotoxin that modulates the insect Nav channel (DmNaV1/tipE (para/tipE)) in a unique manner, with both the activation and inactivation processes being affected. The voltage dependence of activation is shifted toward more hyperpolarized potentials (analogous to site 4 toxins) and a non-inactivating persistent sodium current is induced (site 3-like action). Interestingly, both effects take place in a voltage-dependent manner, producing a bell-shaped curve between -80 and 0 mV. Compared to beta/delta-agatoxin-1 to -3, this toxin appears to affect the insect sodium channel only weakly. This is U3-agatoxin-Ao1k from Agelena orientalis (Funnel-web spider).